The following is a 358-amino-acid chain: Peptide chain release factor 1 (358 aa).

Gln-235 bears the N5-methylglutamine mark.

The protein belongs to the prokaryotic/mitochondrial release factor family. Methylated by PrmC. Methylation increases the termination efficiency of RF1.

The protein localises to the cytoplasm. Functionally, peptide chain release factor 1 directs the termination of translation in response to the peptide chain termination codons UAG and UAA. The chain is Peptide chain release factor 1 from Neisseria gonorrhoeae (strain ATCC 700825 / FA 1090).